A 306-amino-acid chain; its full sequence is Porphobilinogen deaminase (306 aa).

C241 carries the post-translational modification S-(dipyrrolylmethanemethyl)cysteine.

The protein belongs to the HMBS family. Monomer. Dipyrromethane serves as cofactor.

It carries out the reaction 4 porphobilinogen + H2O = hydroxymethylbilane + 4 NH4(+). The protein operates within porphyrin-containing compound metabolism; protoporphyrin-IX biosynthesis; coproporphyrinogen-III from 5-aminolevulinate: step 2/4. In terms of biological role, tetrapolymerization of the monopyrrole PBG into the hydroxymethylbilane pre-uroporphyrinogen in several discrete steps. The sequence is that of Porphobilinogen deaminase from Acidithiobacillus ferrooxidans (strain ATCC 23270 / DSM 14882 / CIP 104768 / NCIMB 8455) (Ferrobacillus ferrooxidans (strain ATCC 23270)).